The primary structure comprises 550 residues: Methyl-accepting chemotaxis protein PcaY (550 aa).

The Cytoplasmic segment spans residues 1 to 19; it reads MVPTRSTARMLANLKIRTG. The chain crosses the membrane as a helical span at residues 20 to 40; sequence MFWVLSLFSLTLLFSTASAWW. Over 41-198 the chain is Periplasmic; it reads AALGSDQQIT…ESDRRLARAQ (158 aa). The ligand-binding domain stretch occupies residues 44 to 196; sequence GSDQQITELD…MLESDRRLAR (153 aa). Residues arginine 71 and asparagine 75 each contribute to the benzoate site. The salicylate site is built by arginine 71, asparagine 75, and tyrosine 135. 71–78 is a 3,4-dihydroxybenzoate binding site; that stretch reads RSSANVSS. L-quinate contacts are provided by residues 71–78, tyrosine 135, glutamine 142, and asparagine 158; that span reads RSSANVSS. Residue glutamine 169 coordinates 3,4-dihydroxybenzoate. Residues 199 to 219 traverse the membrane as a helical segment; sequence LLSLCLLGVTVVLAVLCWAFI. Residues 220–550 lie on the Cytoplasmic side of the membrane; sequence AQRVLHPLRE…MTALVGRFKV (331 aa). The 53-residue stretch at 221 to 273 folds into the HAMP domain; that stretch reads QRVLHPLREAGGHFRRIASGDLSVPVQGQGNNEIGQLFHELQRMQQSQRDTLG. The region spanning 278–514 is the Methyl-accepting transducer domain; the sequence is CARQLDAAAT…EVDRNLLNIR (237 aa).

This sequence belongs to the methyl-accepting chemotaxis (MCP) protein family. Ligand free PcaY_PP-ligand-binding domain (LBD) is present in a monomer-dimer equilibrium. Only the dimeric LBD is able to bind ligands which in turn causes dimer stabilization.

It is found in the cell inner membrane. In terms of biological role, chemotactic-signal transducers respond to changes in the concentration of attractants and repellents in the environment, transduce a signal from the outside to the inside of the cell, and facilitate sensory adaptation through the variation of the level of methylation. PcaY recognizes a wide range of compounds containing a C6-membered ring with a carboxylate group. Binds preferentially compounds that serve as carbon sources and among them those that rapidly promote growth. Tightest binding compounds are quinate, shikimate, 3-dehydroshikimate and protocatechuate, which are at the interception of the biosynthetic shikimate and catabolic quinate pathways. This is Methyl-accepting chemotaxis protein PcaY from Pseudomonas putida (strain ATCC 47054 / DSM 6125 / CFBP 8728 / NCIMB 11950 / KT2440).